The primary structure comprises 150 residues: Endoribonuclease YbeY (150 aa).

Zn(2+)-binding residues include His-113, His-117, and His-123.

Belongs to the endoribonuclease YbeY family. Requires Zn(2+) as cofactor.

It is found in the cytoplasm. In terms of biological role, single strand-specific metallo-endoribonuclease involved in late-stage 70S ribosome quality control and in maturation of the 3' terminus of the 16S rRNA. The protein is Endoribonuclease YbeY of Malacoplasma penetrans (strain HF-2) (Mycoplasma penetrans).